A 610-amino-acid polypeptide reads, in one-letter code: MATSLQAPILGSRPPRRTLRFLSFALFSALVLVVASFSSRKSESGSGLRSGSVEPEYAWTNQMLTWQRAGFHFRTVKNYMNDPSGPMYYKGWYHLFYQHNPNYAYWGDISWGHAVSRDLLNWFHLPVAVKPDRWYDIYGVWTGSITVMPDDGRVVMLYTGGTKEKYQIMSVAMAADPSDPLLVEWVKYDEVNPVLRPPPGIGLTDFRDPNPIWYNTTDSTWQLVIGSKNDSLQHTGIAMVYTTKDFINLTLLPGVLHSVDHVGMWECVDLFPVASSGPLIGRGLDRSMMLADNVKHVLKASMNDEWHDYYAIGSYDVATHRWVPDDESVDVGIGMRIDWGKFYASRTFYDPVKERRVMWGYVGETDSGDADVAKGWASFQGIPRTVLFDVKTGTNVLTWPIEEVESLRMTRKDFSDIVVNKGSTVELHVGDANQLDIEAEFEMDKDALETAIEADIGYNCSSSGGAVSRGVLGPFGLFVLANQDLTELTATYFYVSRATDGSLHTHLCHDEMRSSKANDIVKRVVGGTFTVLDGELLSLRILVDHSIVESFAQGGRTSATSRVYPTEAIYERARVFLFNNATGATITAKAVKVWQMNSTSNQYYPFTSSN.

Residues 1-20 (MATSLQAPILGSRPPRRTLR) lie on the Cytoplasmic side of the membrane. A helical; Signal-anchor for type II membrane protein membrane pass occupies residues 21–38 (FLSFALFSALVLVVASFS). Residues 39–610 (SRKSESGSGL…NQYYPFTSSN (572 aa)) lie on the Vacuolar side of the membrane. Substrate is bound by residues 79–82 (YMND), Gln-98, Trp-106, 141–142 (WT), and 207–208 (RD). Asp-82 is a catalytic residue. N-linked (GlcNAc...) asparagine glycans are attached at residues Asn-215, Asn-229, and Asn-248. Substrate is bound at residue Glu-266. An N-linked (GlcNAc...) asparagine glycan is attached at Asn-459. Cys-460 and Cys-508 are joined by a disulfide. N-linked (GlcNAc...) asparagine glycosylation is found at Asn-580 and Asn-597.

It belongs to the glycosyl hydrolase 32 family. Might be processed in two N-terminal and C-terminal proteolytic fragments.

It localises to the vacuole membrane. The catalysed reaction is [1-beta-D-fructofuranosyl-(2-&gt;1)-]m+1 alpha-D-glucopyranoside + [1-beta-D-fructofuranosyl-(2-&gt;1)-]n+1 alpha-D-glucopyranoside = [1-beta-D-fructofuranosyl-(2-&gt;1)-]m alpha-D-glucopyranoside + [1-beta-D-fructofuranosyl-(2-&gt;1)-]n+1 beta-D-fructofuranosyl-(2-&gt;6)-alpha-D-glucopyranoside (m &gt; 0, n &gt;= 0).. Its function is as follows. Involved in the synthesis of fructan of the inulin neoseries. Has no 1-FFT activity. This Asparagus officinalis (Garden asparagus) protein is 6(G)-fructosyltransferase (FT1).